We begin with the raw amino-acid sequence, 831 residues long: Multiphosphoryl transfer protein (831 aa).

The HPr domain maps to 1–90 (MLTIQFLCPL…EYILVRFIDS (90 aa)). Catalysis depends on H15, which acts as the Pros-phosphohistidine intermediate; for HPr activity. Phosphohistidine; by EI is present on H15. The PTS EI stretch occupies residues 119–650 (GNVLASGVGV…AVKSQLRQLD (532 aa)). The Tele-phosphohistidine intermediate; for PTS EI activity role is filled by H298. A Phosphohistidine; by autocatalysis modification is found at H298. Phosphoenolpyruvate contacts are provided by R405 and R441. Residues E540 and D564 each contribute to the Mg(2+) site. Phosphoenolpyruvate-binding positions include 563–564 (ND) and R574. Catalysis depends on C611, which acts as the Proton donor; for EI activity. Residues 685 to 828 (PLLALENIFV…QSILTLLETE (144 aa)) form the PTS EIIA type-2 domain. H747 functions as the Tele-phosphohistidine intermediate; for PTS EIIA activity in the catalytic mechanism. H747 is modified (phosphohistidine; by HPr).

This sequence belongs to the PEP-utilizing enzyme family. The cofactor is Mg(2+).

It localises to the cytoplasm. It carries out the reaction L-histidyl-[protein] + phosphoenolpyruvate = N(pros)-phospho-L-histidyl-[protein] + pyruvate. The catalysed reaction is D-fructose(out) + N(pros)-phospho-L-histidyl-[protein] = D-fructose 1-phosphate(in) + L-histidyl-[protein]. In terms of biological role, multifunctional protein that includes general (non sugar-specific) and sugar-specific components of the phosphoenolpyruvate-dependent sugar phosphotransferase system (sugar PTS). This major carbohydrate active transport system catalyzes the phosphorylation of incoming sugar substrates concomitantly with their translocation across the cell membrane. The enzyme II FryABC PTS system is involved in fructose transport. The protein is Multiphosphoryl transfer protein (fryA) of Shigella flexneri.